The primary structure comprises 326 residues: N-acetyl-gamma-glutamyl-phosphate reductase (326 aa).

Cys155 is an active-site residue.

This sequence belongs to the NAGSA dehydrogenase family. Type 1 subfamily.

It localises to the cytoplasm. The enzyme catalyses N-acetyl-L-glutamate 5-semialdehyde + phosphate + NADP(+) = N-acetyl-L-glutamyl 5-phosphate + NADPH + H(+). Its pathway is amino-acid biosynthesis; L-arginine biosynthesis; N(2)-acetyl-L-ornithine from L-glutamate: step 3/4. Functionally, catalyzes the NADPH-dependent reduction of N-acetyl-5-glutamyl phosphate to yield N-acetyl-L-glutamate 5-semialdehyde. This is N-acetyl-gamma-glutamyl-phosphate reductase from Shewanella denitrificans (strain OS217 / ATCC BAA-1090 / DSM 15013).